The following is a 370-amino-acid chain: Protein maelstrom 2 (370 aa).

Residues 2 to 68 constitute a DNA-binding region (HMG box); that stretch reads AQNKPNAFMA…VLERESKTER (67 aa).

Belongs to the maelstrom family.

Its subcellular location is the cytoplasm. It localises to the nucleus. Its function is as follows. Involved both in the piRNA and miRNA metabolic processes. As a component of the meiotic nuage, plays a central role during oogenesis by repressing transposable elements and preventing their mobilization, which is essential for the germline integrity. Repression of transposable elements is mediated via the piRNA metabolic process, which mediates the repression of transposable elements during meiosis by forming complexes composed of piRNAs and Piwi proteins and governs the repression of transposons. As a nuclear component, it is required for proper differentiation in the germline stem cell (GSC) lineage by repressing microRNA-7 (miR-7), thereby acting as an indirect regulator of bag-of-marbles (Bam). Acts by binding to the promoter of miR-7 gene and repressing its expression; miR-7 repression alleviates the Bam repression by miR-7, thereby allowing differentiation in the germline stem cell (GSC) lineage. This is Protein maelstrom 2 (mael2) from Drosophila pseudoobscura pseudoobscura (Fruit fly).